The chain runs to 325 residues: Acetyl-coenzyme A carboxylase carboxyl transferase subunit alpha (325 aa).

A CoA carboxyltransferase C-terminal domain is found at 38 to 292 (KLEKRLHALE…DQVLEKSLKQ (255 aa)).

This sequence belongs to the AccA family. In terms of assembly, acetyl-CoA carboxylase is a heterohexamer composed of biotin carboxyl carrier protein (AccB), biotin carboxylase (AccC) and two subunits each of ACCase subunit alpha (AccA) and ACCase subunit beta (AccD).

It localises to the cytoplasm. It carries out the reaction N(6)-carboxybiotinyl-L-lysyl-[protein] + acetyl-CoA = N(6)-biotinyl-L-lysyl-[protein] + malonyl-CoA. The protein operates within lipid metabolism; malonyl-CoA biosynthesis; malonyl-CoA from acetyl-CoA: step 1/1. Functionally, component of the acetyl coenzyme A carboxylase (ACC) complex. First, biotin carboxylase catalyzes the carboxylation of biotin on its carrier protein (BCCP) and then the CO(2) group is transferred by the carboxyltransferase to acetyl-CoA to form malonyl-CoA. The polypeptide is Acetyl-coenzyme A carboxylase carboxyl transferase subunit alpha (Halalkalibacterium halodurans (strain ATCC BAA-125 / DSM 18197 / FERM 7344 / JCM 9153 / C-125) (Bacillus halodurans)).